A 543-amino-acid chain; its full sequence is Probable zinc transporter protein DDB_G0283629 (543 aa).

The disordered stretch occupies residues 1–175; sequence MENFKNNELE…EESKPLNQLR (175 aa). The Cytoplasmic portion of the chain corresponds to 1 to 186; sequence MENFKNNELE…LDSKKKARYS (186 aa). Low complexity-rich tracts occupy residues 11 to 26 and 41 to 55; these read SSPI…SINN and NNNN…NSHI. 2 stretches are compositionally biased toward basic and acidic residues: residues 56 to 66 and 76 to 104; these read NNHDHKHNHEH and HNHD…EHNV. A compositionally biased stretch (low complexity) spans 105–116; it reads GNKNLLTNNNNQ. Residues 130 to 140 are compositionally biased toward gly residues; it reads EDGSSSGGGGG. Residues 187–207 form a helical membrane-spanning segment; sequence LILALTLTTIFMVGEIVGGYF. Topologically, residues 208-216 are extracellular; the sequence is ANSLAIMTD. Residues 217-237 traverse the membrane as a helical segment; that stretch reads AAHLLTDIGAMFLSLFAMWIS. At 238–251 the chain is on the cytoplasmic side; the sequence is QHPPTSSMSFGFHR. A helical transmembrane segment spans residues 252-272; the sequence is AEILGALVSVLMIWALTGVLV. Residues 273-289 lie on the Extracellular side of the membrane; that stretch reads YEAIQRILYPPDAVDGK. The chain crosses the membrane as a helical span at residues 290–310; that stretch reads IMFIIASCGLFINIIDAIILH. Residues 311–375 lie on the Cytoplasmic side of the membrane; that stretch reads WGSGGHGHSH…VRNINVHSAY (65 aa). Residues 319-342 are disordered; that stretch reads SHGGGHGHSHGIGGGTQKKKSKKN. A helical transmembrane segment spans residues 376–396; it reads IHVLGDCFQSIGVMVASCIIW. Over 397–402 the chain is Extracellular; sequence VHPHWK. The chain crosses the membrane as a helical span at residues 403-423; that stretch reads IADPITTLIFSVIVLGTTIKL. Residues 424–543 are Cytoplasmic-facing; sequence LRESLGVLME…NDNLSSPPNQ (120 aa). Residues 516-543 are disordered; that stretch reads KCKDHSCPPPKPKKKKIKNDNLSSPPNQ.

This sequence belongs to the cation diffusion facilitator (CDF) transporter (TC 2.A.4) family. SLC30A subfamily.

The protein localises to the membrane. May be involved in zinc transport from the cytoplasm to either intracellular organelles or extracellular spaces. In Dictyostelium discoideum (Social amoeba), this protein is Probable zinc transporter protein DDB_G0283629.